The sequence spans 485 residues: Rhamnulokinase (485 aa).

Position 10–14 (10–14 (ASSGR)) interacts with ATP. Substrate-binding positions include alanine 78 and 233–235 (HDT). Aspartate 234 (proton acceptor) is an active-site residue. Threonine 256 contributes to the ATP binding site. Residue asparagine 293 participates in substrate binding. Glutamine 301 is an ATP binding site. Cysteine 351 and cysteine 368 are joined by a disulfide. Glycine 400 is a binding site for ATP.

This sequence belongs to the rhamnulokinase family. Mg(2+) serves as cofactor.

The enzyme catalyses L-rhamnulose + ATP = L-rhamnulose 1-phosphate + ADP + H(+). It participates in carbohydrate degradation; L-rhamnose degradation; glycerone phosphate from L-rhamnose: step 2/3. Involved in the catabolism of L-rhamnose (6-deoxy-L-mannose). Catalyzes the transfer of the gamma-phosphate group from ATP to the 1-hydroxyl group of L-rhamnulose to yield L-rhamnulose 1-phosphate. This chain is Rhamnulokinase, found in Bacillus subtilis (strain 168).